Reading from the N-terminus, the 363-residue chain is DNA replication and repair protein RecF (363 aa).

ATP is bound at residue 33 to 40 (GDNGQGKT).

It belongs to the RecF family.

Its subcellular location is the cytoplasm. Its function is as follows. The RecF protein is involved in DNA metabolism; it is required for DNA replication and normal SOS inducibility. RecF binds preferentially to single-stranded, linear DNA. It also seems to bind ATP. The sequence is that of DNA replication and repair protein RecF from Tropheryma whipplei (strain TW08/27) (Whipple's bacillus).